Here is a 1291-residue protein sequence, read N- to C-terminus: MPITINNFNYSDPVDNKNILYLDTHLNTLANEPEKAFRITGNIWVIPDRFSRNSNPNLNKPPRVTSPKSGYYDPNYLSTDSDKDTFLKEIIKLFKRINSREIGEELIYRLSTDIPFPGNNNTPINTFDFDVDFNSVDVKTRQGNNWVKTGSINPSVIITGPRENIIDPETSTFKLTNNTFAAQEGFGALSIISISPRFMLTYSNATNDVGEGRFSKSEFCMDPILILMHELNHAMHNLYGIAIPNDQTISSVTSNIFYSQYNVKLEYAEIYAFGGPTIDLIPKSARKYFEEKALDYYRSIAKRLNSITTANPSSFNKYIGEYKQKLIRKYRFVVESSGEVTVNRNKFVELYNELTQIFTEFNYAKIYNVQNRKIYLSNVYTPVTANILDDNVYDIQNGFNIPKSNLNVLFMGQNLSRNPALRKVNPENMLYLFTKFCHKAIDGRSLYNKTLDCRELLVKNTDLPFIGDISDVKTDIFLRKDINEETEVIYYPDNVSVDQVILSKNTSEHGQLDLLYPSIDSESEILPGENQVFYDNRTQNVDYLNSYYYLESQKLSDNVEDFTFTRSIEEALDNSAKVYTYFPTLANKVNAGVQGGLFLMWANDVVEDFTTNILRKDTLDKISDVSAIIPYIGPALNISNSVRRGNFTEAFAVTGVTILLEAFPEFTIPALGAFVIYSKVQERNEIIKTIDNCLEQRIKRWKDSYEWMMGTWLSRIITQFNNISYQMYDSLNYQAGAIKAKIDLEYKKYSGSDKENIKSQVENLKNSLDVKISEAMNNINKFIRECSVTYLFKNMLPKVIDELNEFDRNTKAKLINLIDSHNIILVGEVDKLKAKVNNSFQNTIPFNIFSYTNNSLLKDIINEYFNNINDSKILSLQNRKNTLVDTSGYNAEVSEEGDVQLNPIFPFDFKLGSSGEDRGKVIVTQNENIVYNSMYESFSISFWIRINKWVSNLPGYTIIDSVKNNSGWSIGIISNFLVFTLKQNEDSEQSINFSYDISNNAPGYNKWFFVTVTNNMMGNMKIYINGKLIDTIKVKELTGINFSKTITFEINKIPDTGLITSDSDNINMWIRDFYIFAKELDGKDINILFNSLQYTNVVKDYWGNDLRYNKEYYMVNIDYLNRYMYANSRQIVFNTRRNNNDFNEGYKIIIKRIRGNTNDTRVRGGDILYFDMTINNKAYNLFMKNETMYADNHSTEDIYAIGLREQTKDINDNIIFQIQPMNNTYYYASQIFKSNFNGENISGICSIGTYRFRLGGDWYRHNYLVPTVKQGNYASLLESTSTHWGFVPVSE.

Histidine 229 lines the Zn(2+) pocket. Residue glutamate 230 is part of the active site. 2 residues coordinate Zn(2+): histidine 233 and glutamate 269. Cysteine 437 and cysteine 453 are oxidised to a cystine. The tract at residues 450–865 (TLDCRELLVK…LLKDIINEYF (416 aa)) is translocation domain (TD). A belt region spans residues 490-541 (YYPDNVSVDQVILSKNTSEHGQLDLLYPSIDSESEILPGENQVFYDNRTQNV). The segment at 866 to 1093 (NNINDSKILS…DINILFNSLQ (228 aa)) is N-terminus of receptor binding domain (N-RBD). A C-terminus of receptor binding domain (C-RBD) region spans residues 1094–1291 (YTNVVKDYWG…THWGFVPVSE (198 aa)). Tyrosine 1119 is a binding site for a ganglioside GD1a (d18:1(4E)). A ganglioside GD1b (d18:1(4E)) is bound by residues 1126 to 1129 (ANSR) and tyrosine 1146. 1247–1250 (IGTY) provides a ligand contact to a ganglioside GD1a (d18:1(4E)). Residues 1256–1258 (GDW) carry the Host ganglioside-binding motif motif. Residues 1269-1283 (KQGNYASLLESTSTH) form a ganglioside-binding loop region. Serine 1281 lines the a ganglioside GD1a (d18:1(4E)) pocket.

This sequence belongs to the peptidase M27 family. In terms of assembly, heterodimer; disulfide-linked heterodimer of a light chain (LC) and a heavy chain (HC). The LC has the proteolytic/pharmacological activity. The N- and C-terminal of the HC mediate channel formation and toxin binding, respectively. Can also be purified in complex with a non-toxic component that is larger than the HC. The stoichiometry of the whole complex has been modeled as one BoNT/C, one NTNHA, three HA-70, six HA-33 and three HA-17. Zn(2+) is required as a cofactor.

The protein resides in the secreted. It carries out the reaction Limited hydrolysis of proteins of the neuroexocytosis apparatus, synaptobrevins, SNAP25 or syntaxin. No detected action on small molecule substrates.. 1,10-phenanthroline, EDTA and partially captopril block cleavage of syntaxin in brain synaptosomes. Treatment of synaptosomes with a mild detergent also inhibits cleavage. 1,10-phenanthroline partially antagonizes inhibitions of neurotransmitter release. Functionally, botulinum toxin causes flaccid paralysis by inhibiting neurotransmitter (acetylcholine) release from the presynaptic membranes of nerve terminals of the eukaryotic host skeletal and autonomic nervous system, with frequent heart or respiratory failure. Is unique among characterized BoNTs in having 2 substrates, syntaxin (STX) and SNAP25. Precursor of botulinum neurotoxin C which unlike most BoNTs seems not to have a proteinaceous coreceptor, and instead recognizes 2 different complex polysialylated gangliosides found on neural tissue probably found in synaptic vesicles. Upon synaptic vesicle recycling the toxin is taken up via the endocytic pathway. When the pH of the toxin-containing endosome drops a structural rearrangement occurs so that the N-terminus of the heavy chain (HC) forms pores that allows the light chain (LC) to translocate into the cytosol. Once in the cytosol the disulfide bond linking the 2 subunits is reduced and LC cleaves its target protein on synaptic vesicles, preventing their fusion with the cytoplasmic membrane and thus neurotransmitter release. In vitro the whole toxin only has protease activity after reduction. Electrical stimulation increases uptake of toxin, presumably by transiently exposing a receptor usually found in eukaryotic target synaptic vesicles. Forms ion-conducting channels at around pH 6.1. Requires complex eukaryotic host polysialogangliosides for full neurotoxicity. Synaptic vesicle glycoproteins (SV2) do not seem to act as its receptor. Has proteolytic activity. After translocation into the eukaryotic host cytosol, inhibits neurotransmitter release by acting as a zinc endopeptidase that cleaves syntaxin-1A/STX1A and syntaxin-1B/STX1B. Cleaves the '253-Arg-|-Ala-254' bond of STX1 and the '252-Arg-|-Ala-253' bond of STX2; also acts on syntaxin 3 (STX3) but not 4 (STX4). Cleaves the '198-Arg-|-Ala-199' bond of SNAP25. Recognizes the '93-Asn--Met-202' region of SNAP25. In terms of biological role, responsible for host epithelial cell transcytosis, host nerve cell targeting and translocation of light chain (LC) into eukaryotic host cytosol. Composed of 3 subdomains; the translocation domain (TD), and N-terminus and C-terminus of the receptor-binding domain (RBD). The RBD is responsible for the adherence of the toxin to the eukaryotic target cell surface. It simultaneously recognizes 2 polysialated gangliosides coreceptors in close proximity on host synaptic vesicles. The N-terminus of the TD wraps an extended belt around the perimeter of the LC, protecting Zn(2+) in the active site; it may also prevent premature LC dissociation from the translocation channel and protect toxin prior to translocation. The TD inserts into synaptic vesicle membrane to allow translocation into the host cytosol. The C-terminal half of the HC (residues 864-1291) binds neurons in a dose-dependent manner. The C-terminal half of the HC (residues 863-1291) binds eukaryotic host gangliosides in the order GD1b &gt; GT1b &gt; GD1a &gt; GM1a. Has 2 ganglioside binding sites; Sia-1 prefers a sia7 sialic acid and sugars within the ganglioside (GD1b &gt; GT1b), whereas GBP2 recognizes a sia5 sialic acid (GT1b and GD1a). Both sites are required for HC to enter neurons, acting via different gangliosides. This suggests that 2 gangliosides serve as toxin receptors. Synaptic activity (depolarization with K(+)) increases uptake by neurons. Treatment of synaptosomes with proteinase K does not reduce HC binding, suggesting there is no protein receptor or it is protected from extracellular proteases. Decreases uptake and toxicity of whole BoNT/A, but also interferes with uptake of BoNT/E and BoNT/F. HC also binds phosphoinositides, which might play a role in membrane-binding. In Clostridium botulinum C phage (Clostridium botulinum C bacteriophage), this protein is Botulinum neurotoxin type C.